Here is a 322-residue protein sequence, read N- to C-terminus: GTP 3',8-cyclase (322 aa).

A Radical SAM core domain is found at 5–217 (SYGRVVDYLR…DIISKKYNIK (213 aa)). Arginine 14 serves as a coordination point for GTP. The [4Fe-4S] cluster site is built by cysteine 21 and cysteine 25. S-adenosyl-L-methionine is bound at residue tyrosine 27. Residue cysteine 28 coordinates [4Fe-4S] cluster. GTP is bound at residue arginine 64. Residue glycine 68 coordinates S-adenosyl-L-methionine. Threonine 95 contacts GTP. Serine 119 provides a ligand contact to S-adenosyl-L-methionine. Lysine 155 provides a ligand contact to GTP. S-adenosyl-L-methionine is bound at residue methionine 189. The [4Fe-4S] cluster site is built by cysteine 249 and cysteine 252. 254–256 (RLR) contributes to the GTP binding site. Cysteine 266 lines the [4Fe-4S] cluster pocket.

It belongs to the radical SAM superfamily. MoaA family. Monomer and homodimer. The cofactor is [4Fe-4S] cluster.

The enzyme catalyses GTP + AH2 + S-adenosyl-L-methionine = (8S)-3',8-cyclo-7,8-dihydroguanosine 5'-triphosphate + 5'-deoxyadenosine + L-methionine + A + H(+). It participates in cofactor biosynthesis; molybdopterin biosynthesis. Catalyzes the cyclization of GTP to (8S)-3',8-cyclo-7,8-dihydroguanosine 5'-triphosphate. The sequence is that of GTP 3',8-cyclase from Campylobacter fetus subsp. fetus (strain 82-40).